A 216-amino-acid chain; its full sequence is Octanoyltransferase (216 aa).

The BPL/LPL catalytic domain maps to 30–204; the sequence is KNNINEIWLL…NCKKFLMMNN (175 aa). Residues 68–75, 135–137, and 148–150 contribute to the substrate site; these read RGGHMTFH, SIG, and GLA. Residue Cys-166 is the Acyl-thioester intermediate of the active site.

This sequence belongs to the LipB family.

Its subcellular location is the cytoplasm. The enzyme catalyses octanoyl-[ACP] + L-lysyl-[protein] = N(6)-octanoyl-L-lysyl-[protein] + holo-[ACP] + H(+). It participates in protein modification; protein lipoylation via endogenous pathway; protein N(6)-(lipoyl)lysine from octanoyl-[acyl-carrier-protein]: step 1/2. Its function is as follows. Catalyzes the transfer of endogenously produced octanoic acid from octanoyl-acyl-carrier-protein onto the lipoyl domains of lipoate-dependent enzymes. Lipoyl-ACP can also act as a substrate although octanoyl-ACP is likely to be the physiological substrate. In Wigglesworthia glossinidia brevipalpis, this protein is Octanoyltransferase.